A 514-amino-acid chain; its full sequence is ATP synthase subunit alpha (514 aa).

ATP is bound at residue 170–177 (GDRQTGKT).

It belongs to the ATPase alpha/beta chains family. In terms of assembly, F-type ATPases have 2 components, CF(1) - the catalytic core - and CF(0) - the membrane proton channel. CF(1) has five subunits: alpha(3), beta(3), gamma(1), delta(1), epsilon(1). CF(0) has three main subunits: a(1), b(2) and c(9-12). The alpha and beta chains form an alternating ring which encloses part of the gamma chain. CF(1) is attached to CF(0) by a central stalk formed by the gamma and epsilon chains, while a peripheral stalk is formed by the delta and b chains.

Its subcellular location is the cell inner membrane. It carries out the reaction ATP + H2O + 4 H(+)(in) = ADP + phosphate + 5 H(+)(out). In terms of biological role, produces ATP from ADP in the presence of a proton gradient across the membrane. The alpha chain is a regulatory subunit. The protein is ATP synthase subunit alpha of Psychrobacter cryohalolentis (strain ATCC BAA-1226 / DSM 17306 / VKM B-2378 / K5).